Reading from the N-terminus, the 483-residue chain is Glutamate--tRNA ligase (483 aa).

A 'HIGH' region motif is present at residues proline 11–asparagine 21. Zn(2+) contacts are provided by cysteine 108, cysteine 110, histidine 135, and aspartate 137. Residues lysine 252–arginine 256 carry the 'KMSKS' region motif. Position 255 (lysine 255) interacts with ATP.

It belongs to the class-I aminoacyl-tRNA synthetase family. Glutamate--tRNA ligase type 1 subfamily. Monomer. The cofactor is Zn(2+).

The protein localises to the cytoplasm. The catalysed reaction is tRNA(Glu) + L-glutamate + ATP = L-glutamyl-tRNA(Glu) + AMP + diphosphate. Functionally, catalyzes the attachment of glutamate to tRNA(Glu) in a two-step reaction: glutamate is first activated by ATP to form Glu-AMP and then transferred to the acceptor end of tRNA(Glu). The protein is Glutamate--tRNA ligase of Bacillus subtilis (strain 168).